Consider the following 283-residue polypeptide: Pantothenate synthetase (283 aa).

30 to 37 (MGFLHEGH) serves as a coordination point for ATP. The active-site Proton donor is H37. A (R)-pantoate-binding site is contributed by Q61. Q61 lines the beta-alanine pocket. 147–150 (GKKD) lines the ATP pocket. Q153 serves as a coordination point for (R)-pantoate. Residues V176 and 184–187 (MSSR) each bind ATP.

This sequence belongs to the pantothenate synthetase family. Homodimer.

It is found in the cytoplasm. The enzyme catalyses (R)-pantoate + beta-alanine + ATP = (R)-pantothenate + AMP + diphosphate + H(+). It functions in the pathway cofactor biosynthesis; (R)-pantothenate biosynthesis; (R)-pantothenate from (R)-pantoate and beta-alanine: step 1/1. In terms of biological role, catalyzes the condensation of pantoate with beta-alanine in an ATP-dependent reaction via a pantoyl-adenylate intermediate. The polypeptide is Pantothenate synthetase (Trichlorobacter lovleyi (strain ATCC BAA-1151 / DSM 17278 / SZ) (Geobacter lovleyi)).